The sequence spans 78 residues: Large ribosomal subunit protein bL28 (78 aa).

Residues 1 to 25 (MSRVCQVTGKRPAVGNNRSHAKNAT) form a disordered region.

Belongs to the bacterial ribosomal protein bL28 family.

The chain is Large ribosomal subunit protein bL28 from Vibrio cholerae serotype O1 (strain ATCC 39541 / Classical Ogawa 395 / O395).